The following is a 227-amino-acid chain: Cytidylate kinase (227 aa).

Position 12-20 (12-20 (GPSGAGKGT)) interacts with ATP.

Belongs to the cytidylate kinase family. Type 1 subfamily.

Its subcellular location is the cytoplasm. It catalyses the reaction CMP + ATP = CDP + ADP. The enzyme catalyses dCMP + ATP = dCDP + ADP. This chain is Cytidylate kinase, found in Marinomonas sp. (strain MWYL1).